A 290-amino-acid polypeptide reads, in one-letter code: Small ribosomal subunit protein uS11 (290 aa).

The interval 243 to 271 (DWEAAPAGFPATGEWSDAAPGAAAPNWDA) is disordered. Low complexity predominate over residues 257–271 (WSDAAPGAAAPNWDA).

This sequence belongs to the universal ribosomal protein uS2 family. Component of the small ribosomal subunit (SSU). Mature N.crassa ribosomes consist of a small (40S) and a large (60S) subunit. The 40S small subunit contains 1 molecule of ribosomal RNA (18S rRNA) and at least 32 different proteins. The large 60S subunit contains 3 rRNA molecules (26S, 5.8S and 5S rRNA) and at least 42 different proteins. Interacts with rps21.

Its subcellular location is the cytoplasm. Component of the ribosome, a large ribonucleoprotein complex responsible for the synthesis of proteins in the cell. The small ribosomal subunit (SSU) binds messenger RNAs (mRNAs) and translates the encoded message by selecting cognate aminoacyl-transfer RNA (tRNA) molecules. The large subunit (LSU) contains the ribosomal catalytic site termed the peptidyl transferase center (PTC), which catalyzes the formation of peptide bonds, thereby polymerizing the amino acids delivered by tRNAs into a polypeptide chain. The nascent polypeptides leave the ribosome through a tunnel in the LSU and interact with protein factors that function in enzymatic processing, targeting, and the membrane insertion of nascent chains at the exit of the ribosomal tunnel. uS2 is required for the assembly and/or stability of the 40S ribosomal subunit. Required for the processing of the 20S rRNA-precursor to mature 18S rRNA in a late step of the maturation of 40S ribosomal subunits. In Neurospora crassa (strain ATCC 24698 / 74-OR23-1A / CBS 708.71 / DSM 1257 / FGSC 987), this protein is Small ribosomal subunit protein uS11.